The chain runs to 136 residues: Large-conductance mechanosensitive channel (136 aa).

Helical transmembrane passes span 9-29 (AFAS…GAAF), 32-52 (IVSS…LGGV), 54-74 (FSDL…VVIA), and 79-99 (IQTV…LKAI).

Belongs to the MscL family. Homopentamer.

Its subcellular location is the cell inner membrane. Functionally, channel that opens in response to stretch forces in the membrane lipid bilayer. May participate in the regulation of osmotic pressure changes within the cell. This Shewanella oneidensis (strain ATCC 700550 / JCM 31522 / CIP 106686 / LMG 19005 / NCIMB 14063 / MR-1) protein is Large-conductance mechanosensitive channel.